We begin with the raw amino-acid sequence, 333 residues long: Gap junction alpha-4 protein (333 aa).

Residues 1–20 (MGDWGFLEKLLDQVQEHSTV) are Cytoplasmic-facing. A helical membrane pass occupies residues 21-40 (VGKIWLTVLFIFRILILGLA). Over 41–76 (GESVWGDEQSDFECNTAQPGCTNVCYDQAFPISHIR) the chain is Extracellular. The helical transmembrane segment at 77–99 (YWVLQFLFVSTPTLIYLGHVIYL) threads the bilayer. The Cytoplasmic segment spans residues 100 to 148 (SRREERLRQKEGELRALPSKDLHVERALAAIEHQMAKISVAEDGRLRIR). The helical transmembrane segment at 149 to 171 (GALMGTYVVSVLCKSVLEAGFLY) threads the bilayer. The Extracellular segment spans residues 172-208 (GQWRLYGWTMEPVFVCQRAPCPHIVDCYVSRPTEKTI). Residues 209–231 (FIIFMLVVGVISLVLNLLELVHL) traverse the membrane as a helical segment. At 232-333 (LCRCVSREIK…NSSASKKQYV (102 aa)) the chain is on the cytoplasmic side. Residues 292–333 (ANLTTEERLTSSRPPPFVNTAPQGGRKSPSRPNSSASKKQYV) form a disordered region. Over residues 321–333 (SRPNSSASKKQYV) the composition is skewed to polar residues.

It belongs to the connexin family. Alpha-type (group II) subfamily. As to quaternary structure, a connexon is composed of a hexamer of connexins. In terms of tissue distribution, highly expressed in lung.

Its subcellular location is the cell membrane. The protein localises to the cell junction. It localises to the gap junction. Functionally, one gap junction consists of a cluster of closely packed pairs of transmembrane channels, the connexons, through which materials of low MW diffuse from one cell to a neighboring cell. This chain is Gap junction alpha-4 protein (Gja4), found in Mus musculus (Mouse).